The following is a 450-amino-acid chain: Zinc finger protein 446 (450 aa).

In terms of domain architecture, SCAN box spans 26–108 (RLRFRGFCYQ…ALVEGLQHDP (83 aa)). Lysine 130 participates in a covalent cross-link: Glycyl lysine isopeptide (Lys-Gly) (interchain with G-Cter in SUMO2). Disordered regions lie at residues 130-155 (KTEEPLGSPHPSGTVESPGEGPQDTR) and 168-205 (EEPNVDGQEVAPSSPPLAAQSPEGNHGHQEPASTSFHP). A Phosphoserine modification is found at serine 137. The KRAB domain occupies 208–254 (IQEEWGLLDRSQKELYWDAMLEKYGTVVSLGLPPHQPEAQAQSELGM). A Phosphoserine modification is found at serine 218. Disordered regions lie at residues 263–331 (RSLR…PRKP) and 354–389 (HTSGPGVQSPGLATGESTEKPPQGEVAFPHHPRRSL). A compositionally biased stretch (pro residues) spans 275-286 (PGCPEAQPPQGP). Residues 287–306 (GPAAWEGLSGAATPAPTVRP) are compositionally biased toward low complexity. Threonine 308 carries the phosphothreonine modification. Residue lysine 330 forms a Glycyl lysine isopeptide (Lys-Gly) (interchain with G-Cter in SUMO2) linkage. 3 consecutive C2H2-type zinc fingers follow at residues 332–359 (YTCEQCGRGFDWKSVFVIHHRTHTSGPG), 395–422 (YPCEECGCSFSWKSQLVIHRKSHTGQRR), and 423–450 (HFCSDCGRAFDWKSQLVIHRKGHRPEVP).

The protein belongs to the krueppel C2H2-type zinc-finger protein family.

Its subcellular location is the nucleus. In terms of biological role, may be involved in transcriptional regulation. This chain is Zinc finger protein 446 (ZNF446), found in Homo sapiens (Human).